The sequence spans 127 residues: MQKTSIPDFQITAKVVYVPSESRPDEGYHFFAYKITITNTGSTPAQLMSRHWVITDALGKKEEVRGPGVVGLQPKIQPGQTFEYDSACPLTTSTGSMVGRYFFVGESGESFSVEVPEFYLIAPLALH.

Residues 3-127 (KTSIPDFQIT…FYLIAPLALH (125 aa)) enclose the ApaG domain.

The sequence is that of Protein ApaG from Bdellovibrio bacteriovorus (strain ATCC 15356 / DSM 50701 / NCIMB 9529 / HD100).